A 445-amino-acid polypeptide reads, in one-letter code: MVKRQTDTIFALSTAQGKSGVAVIRISGPSSMEALRLLGVKDDISPRVAHCRLLHDSKGRLIDQAVVLYFPKPGSFTGEDVVELQVHGSRAVIRLLYEELQTFIRIAEPGEFSLRAYLNGKIDLTRAEGIADLINAETDAQLRQALAQSTGKLEKQYDQWRSILLDILTDLEACIDFPEDVDSSCVLGGIYNNIEKLCAVLGQYLNDGHRGERLRSGVRVVILGPPNAGKSTLFNSIARRNAAIVSEHPGTTRDVLEVAIDIGGYPYIVLDTAGIRESCDGIEQEGIKRAKMAAEEADIKIVMYPYETTSMQGIDPICDLQDEKTILVLSKADNVDLPESKCIDGKEFHLISVHQDRGIGKLLTLIQEKSRDSFPQEGDVFITSQRHRSHLQKALQVVDAVSKVMPIEIVAEHLRIAAYELGRVTGAVSGDDILDDIFSKFCIGK.

(6S)-5-formyl-5,6,7,8-tetrahydrofolate contacts are provided by Arg-25, Glu-83, and Lys-121. One can recognise a TrmE-type G domain in the interval 217–371 (GVRVVILGPP…LLTLIQEKSR (155 aa)). GTP contacts are provided by residues 227–232 (NAGKST), 246–252 (SEHPGTT), and 271–274 (DTAG). 2 residues coordinate Mg(2+): Ser-231 and Thr-252. A (6S)-5-formyl-5,6,7,8-tetrahydrofolate-binding site is contributed by Lys-445.

It belongs to the TRAFAC class TrmE-Era-EngA-EngB-Septin-like GTPase superfamily. TrmE GTPase family. As to quaternary structure, homodimer. Heterotetramer of two MnmE and two MnmG subunits. K(+) serves as cofactor.

The protein resides in the cytoplasm. Exhibits a very high intrinsic GTPase hydrolysis rate. Involved in the addition of a carboxymethylaminomethyl (cmnm) group at the wobble position (U34) of certain tRNAs, forming tRNA-cmnm(5)s(2)U34. The sequence is that of tRNA modification GTPase MnmE from Anaplasma phagocytophilum (strain HZ).